The primary structure comprises 334 residues: Probable tRNA pseudouridine synthase B (334 aa).

The active-site Nucleophile is the Asp-82. The region spanning 250 to 325 is the PUA domain; sequence LPKVWIRDSA…IAVDVDKVFM (76 aa).

Belongs to the pseudouridine synthase TruB family. Type 2 subfamily.

The enzyme catalyses uridine(55) in tRNA = pseudouridine(55) in tRNA. Its function is as follows. Could be responsible for synthesis of pseudouridine from uracil-55 in the psi GC loop of transfer RNAs. The sequence is that of Probable tRNA pseudouridine synthase B from Thermococcus onnurineus (strain NA1).